Reading from the N-terminus, the 214-residue chain is Adenylate kinase (214 aa).

Residue 10-15 participates in ATP binding; sequence GAGKGT. Residues 30-59 form an NMP region; it reads ATGDVLRAAVKEGTPLGLEAKAAMDRGDLV. AMP is bound by residues Thr-31, Arg-36, 57-59, and Gln-92; that span reads DLV. The tract at residues 126 to 161 is LID; it reads GRTTCEACQRPFFGRQPGETCTEGGVSGTLVRRKDD. Position 127 (Arg-127) interacts with ATP. 2 residues coordinate AMP: Arg-158 and Arg-169. Gly-198 is a binding site for ATP.

This sequence belongs to the adenylate kinase family. In terms of assembly, monomer.

The protein localises to the cytoplasm. The enzyme catalyses AMP + ATP = 2 ADP. It participates in purine metabolism; AMP biosynthesis via salvage pathway; AMP from ADP: step 1/1. Its function is as follows. Catalyzes the reversible transfer of the terminal phosphate group between ATP and AMP. Plays an important role in cellular energy homeostasis and in adenine nucleotide metabolism. This chain is Adenylate kinase, found in Gemmatimonas aurantiaca (strain DSM 14586 / JCM 11422 / NBRC 100505 / T-27).